The following is a 1053-amino-acid chain: Probable sucrose-phosphate synthase (1053 aa).

The span at 103–115 (RRQERERGRREAV) shows a compositional bias: basic and acidic residues. 2 disordered regions span residues 103–127 (RRQE…EGEK) and 673–693 (LRSI…DSLR).

The protein belongs to the glycosyltransferase 1 family. Homodimer or homotetramer.

The enzyme catalyses beta-D-fructose 6-phosphate + UDP-alpha-D-glucose = sucrose 6(F)-phosphate + UDP + H(+). It functions in the pathway glycan biosynthesis; sucrose biosynthesis; sucrose from D-fructose 6-phosphate and UDP-alpha-D-glucose: step 1/2. Its activity is regulated as follows. Activity is regulated by phosphorylation and moderated by concentration of metabolites and light. In terms of biological role, plays a role in photosynthetic sucrose synthesis by catalyzing the rate-limiting step of sucrose biosynthesis from UDP-glucose and fructose- 6-phosphate. Involved in the regulation of carbon partitioning in the leaves of plants. May regulate the synthesis of sucrose and therefore play a major role as a limiting factor in the export of photoassimilates out of the leaf. Plays a role for sucrose availability that is essential for plant growth and fiber elongation. This is Probable sucrose-phosphate synthase (SPS) from Solanum tuberosum (Potato).